We begin with the raw amino-acid sequence, 88 residues long: Putative septation protein SpoVG (88 aa).

It belongs to the SpoVG family.

Its function is as follows. Could be involved in septation. The protein is Putative septation protein SpoVG of Lachnospira eligens (strain ATCC 27750 / DSM 3376 / VPI C15-48 / C15-B4) (Eubacterium eligens).